Reading from the N-terminus, the 63-residue chain is MSRLLIFILTAVVLSVIIDILNNSKVEGQYCCYTCIPDCSKSCQDSGLRFKACIPYRSCLCQY.

The first 28 residues, 1–28, serve as a signal peptide directing secretion; the sequence is MSRLLIFILTAVVLSVIIDILNNSKVEG. 3 disulfide bridges follow: C35-C53, C39-C59, and C43-C61.

Belongs to the short scorpion toxin superfamily. Potassium channel inhibitor family. Expressed by the venom gland.

The protein resides in the secreted. In terms of biological role, may block voltage-gated potassium channels (Kv). This Mesobuthus eupeus (Lesser Asian scorpion) protein is Potassium channel toxin MeuTXKalpha4.